The chain runs to 180 residues: NADH-quinone oxidoreductase subunit I (180 aa).

4Fe-4S ferredoxin-type domains follow at residues 48-80 (IVLT…LQKA) and 90-119 (EFFR…LTPD). C60, C63, C66, C70, C99, C102, C105, and C109 together coordinate [4Fe-4S] cluster.

The protein belongs to the complex I 23 kDa subunit family. In terms of assembly, NDH-1 is composed of 13 different subunits. Subunits NuoA, H, J, K, L, M, N constitute the membrane sector of the complex. The cofactor is [4Fe-4S] cluster.

It localises to the cell inner membrane. The catalysed reaction is a quinone + NADH + 5 H(+)(in) = a quinol + NAD(+) + 4 H(+)(out). In terms of biological role, NDH-1 shuttles electrons from NADH, via FMN and iron-sulfur (Fe-S) centers, to quinones in the respiratory chain. The immediate electron acceptor for the enzyme in this species is believed to be ubiquinone. Couples the redox reaction to proton translocation (for every two electrons transferred, four hydrogen ions are translocated across the cytoplasmic membrane), and thus conserves the redox energy in a proton gradient. The polypeptide is NADH-quinone oxidoreductase subunit I (Erwinia tasmaniensis (strain DSM 17950 / CFBP 7177 / CIP 109463 / NCPPB 4357 / Et1/99)).